The chain runs to 510 residues: Light-independent protochlorophyllide reductase subunit B (510 aa).

Residue D36 participates in [4Fe-4S] cluster binding. Residue D297 is the Proton donor of the active site. Residue 432–433 (GM) participates in substrate binding.

Belongs to the ChlB/BchB/BchZ family. As to quaternary structure, protochlorophyllide reductase is composed of three subunits; ChlL, ChlN and ChlB. Forms a heterotetramer of two ChlB and two ChlN subunits. [4Fe-4S] cluster serves as cofactor.

The protein resides in the plastid. The protein localises to the chloroplast. The enzyme catalyses chlorophyllide a + oxidized 2[4Fe-4S]-[ferredoxin] + 2 ADP + 2 phosphate = protochlorophyllide a + reduced 2[4Fe-4S]-[ferredoxin] + 2 ATP + 2 H2O. It participates in porphyrin-containing compound metabolism; chlorophyll biosynthesis (light-independent). Functionally, component of the dark-operative protochlorophyllide reductase (DPOR) that uses Mg-ATP and reduced ferredoxin to reduce ring D of protochlorophyllide (Pchlide) to form chlorophyllide a (Chlide). This reaction is light-independent. The NB-protein (ChlN-ChlB) is the catalytic component of the complex. This chain is Light-independent protochlorophyllide reductase subunit B, found in Pinus thunbergii (Japanese black pine).